The chain runs to 213 residues: Holliday junction resolvase RecU (213 aa).

Positions 99, 101, 114, and 133 each coordinate Mg(2+).

Belongs to the RecU family. Mg(2+) serves as cofactor.

It is found in the cytoplasm. It catalyses the reaction Endonucleolytic cleavage at a junction such as a reciprocal single-stranded crossover between two homologous DNA duplexes (Holliday junction).. In terms of biological role, endonuclease that resolves Holliday junction intermediates in genetic recombination. Cleaves mobile four-strand junctions by introducing symmetrical nicks in paired strands. Promotes annealing of linear ssDNA with homologous dsDNA. Required for DNA repair, homologous recombination and chromosome segregation. The protein is Holliday junction resolvase RecU of Lactococcus lactis subsp. cremoris (strain MG1363).